We begin with the raw amino-acid sequence, 218 residues long: Putative receptor like protein 25 (218 aa).

The Extracellular portion of the chain corresponds to 1–178 (MIYTKNAYGS…QEDAKVLNWK (178 aa)). LRR repeat units follow at residues 34-58 (LTLY…IGLL), 59-82 (KALI…MANL), 83-106 (IELE…LKTL), and 108-131 (FLGY…QITG). N-linked (GlcNAc...) asparagine glycosylation is present at N65. N113 is a glycosylation site (N-linked (GlcNAc...) asparagine). Residues 179–199 (AVATGYGPGVFFGLAIAQIIA) traverse the membrane as a helical segment. At 200–218 (SYKPEWLVKIIGPNKRRNH) the chain is on the cytoplasmic side.

Belongs to the RLP family.

It localises to the cell membrane. The sequence is that of Putative receptor like protein 25 from Arabidopsis thaliana (Mouse-ear cress).